A 484-amino-acid chain; its full sequence is L-amino-acid oxidase (484 aa).

Cysteine 8 and cysteine 171 are joined by a disulfide. FAD-binding positions include 41 to 42 (MS), 61 to 62 (EA), and arginine 69. Histidine 73 is a Zn(2+) binding site. 85-88 (GPMR) serves as a coordination point for FAD. Residue arginine 88 participates in substrate binding. Residue asparagine 170 is glycosylated (N-linked (GlcNAc...) asparagine). Histidine 221 lines the substrate pocket. FAD is bound at residue valine 259. Glutamate 277 serves as a coordination point for Zn(2+). A disulfide bridge connects residues cysteine 329 and cysteine 410. Residue tyrosine 370 coordinates substrate. FAD is bound by residues glutamate 455 and 462–467 (GWIDST). 462 to 463 (GW) is a substrate binding site.

It belongs to the flavin monoamine oxidase family. FIG1 subfamily. As to quaternary structure, homodimer; non-covalently linked. FAD serves as cofactor. Expressed by the venom gland.

The protein resides in the secreted. The catalysed reaction is an L-alpha-amino acid + O2 + H2O = a 2-oxocarboxylate + H2O2 + NH4(+). In terms of biological role, catalyzes an oxidative deamination of predominantly hydrophobic and aromatic L-amino acids, thus producing hydrogen peroxide that may contribute to the diverse toxic effects of this enzyme. Exhibits diverse biological activities, such as hemorrhage, hemolysis, edema, apoptosis of vascular endothelial cells or tumor cell lines, antibacterial and antiparasitic activities, as well as regulation of platelet aggregation. Effects of snake L-amino oxidases on platelets are controversial, since they either induce aggregation or inhibit agonist-induced aggregation. These different effects are probably due to different experimental conditions. The sequence is that of L-amino-acid oxidase from Vipera ammodytes ammodytes (Western sand viper).